Reading from the N-terminus, the 202-residue chain is MSLIPMVIETTGRSERAYDIYSRLLKDRIVLLGSEVNDTVASLICAQLLFLESQDPEKEISLYINSPGGSVTAGLAIYDTLRFISAPVSTVCMGRAASMGAFLLAAGKPGLRYALPNSQIMIHQPSAGYQGQATDIEIHAKEVLRLKERLNRILAENTGRPYKDIVKATERDNFLTPEEAKDLGIIDRVLVSRQDMAQEKSE.

The active-site Nucleophile is the S98. Residue H123 is part of the active site.

This sequence belongs to the peptidase S14 family. Fourteen ClpP subunits assemble into 2 heptameric rings which stack back to back to give a disk-like structure with a central cavity, resembling the structure of eukaryotic proteasomes.

The protein resides in the cytoplasm. It catalyses the reaction Hydrolysis of proteins to small peptides in the presence of ATP and magnesium. alpha-casein is the usual test substrate. In the absence of ATP, only oligopeptides shorter than five residues are hydrolyzed (such as succinyl-Leu-Tyr-|-NHMec, and Leu-Tyr-Leu-|-Tyr-Trp, in which cleavage of the -Tyr-|-Leu- and -Tyr-|-Trp bonds also occurs).. Functionally, cleaves peptides in various proteins in a process that requires ATP hydrolysis. Has a chymotrypsin-like activity. Plays a major role in the degradation of misfolded proteins. This Desulfovibrio desulfuricans (strain ATCC 27774 / DSM 6949 / MB) protein is ATP-dependent Clp protease proteolytic subunit.